The primary structure comprises 301 residues: Putative S-adenosyl-L-methionine-dependent methyltransferase MUL_0450 (301 aa).

Residues Asp127 and 156 to 157 (DL) each bind S-adenosyl-L-methionine.

Belongs to the UPF0677 family.

Functionally, exhibits S-adenosyl-L-methionine-dependent methyltransferase activity. The protein is Putative S-adenosyl-L-methionine-dependent methyltransferase MUL_0450 of Mycobacterium ulcerans (strain Agy99).